The following is a 682-amino-acid chain: DNA-directed RNA polymerase subunit beta' (682 aa).

C69, C71, C87, and C90 together coordinate Zn(2+). D489, D491, and D493 together coordinate Mg(2+).

It belongs to the RNA polymerase beta' chain family. RpoC1 subfamily. In plastids the minimal PEP RNA polymerase catalytic core is composed of four subunits: alpha, beta, beta', and beta''. When a (nuclear-encoded) sigma factor is associated with the core the holoenzyme is formed, which can initiate transcription. It depends on Mg(2+) as a cofactor. The cofactor is Zn(2+).

It is found in the plastid. The protein resides in the chloroplast. It carries out the reaction RNA(n) + a ribonucleoside 5'-triphosphate = RNA(n+1) + diphosphate. In terms of biological role, DNA-dependent RNA polymerase catalyzes the transcription of DNA into RNA using the four ribonucleoside triphosphates as substrates. The protein is DNA-directed RNA polymerase subunit beta' of Agrostis stolonifera (Creeping bentgrass).